Reading from the N-terminus, the 796-residue chain is ATP-dependent DNA helicase PIF6 (796 aa).

Positions 197 to 230 (RPTGLPSAHSGGKLPKHMGGDELNPQLEGSTTPG) are disordered. 255–262 (GSAGTGKT) provides a ligand contact to ATP. A DNA-binding region spans residues 636 to 655 (QAYVALSRVRSREDLMLTAF). Disordered regions lie at residues 692 to 719 (KGKT…PEEH) and 762 to 796 (TSSA…VDDD).

It belongs to the helicase family. PIF1 subfamily. In terms of assembly, monomer. Mg(2+) serves as cofactor.

The protein localises to the nucleus. It carries out the reaction Couples ATP hydrolysis with the unwinding of duplex DNA at the replication fork by translocating in the 5'-3' direction. This creates two antiparallel DNA single strands (ssDNA). The leading ssDNA polymer is the template for DNA polymerase III holoenzyme which synthesizes a continuous strand.. The enzyme catalyses ATP + H2O = ADP + phosphate + H(+). DNA-dependent ATPase and 5'-3' DNA helicase required for the maintenance of genome stability. The chain is ATP-dependent DNA helicase PIF6 from Trypanosoma brucei brucei (strain 927/4 GUTat10.1).